The primary structure comprises 65 residues: Large ribosomal subunit protein bL35 (65 aa).

Positions 1-15 (MPKMKTKKSASKRFT) are enriched in basic residues. Disordered stretches follow at residues 1-26 (MPKM…KRGQ) and 38-65 (TKNK…MPYA). Positions 45-54 (RGTEGVHETN) are enriched in basic and acidic residues.

It belongs to the bacterial ribosomal protein bL35 family.

The sequence is that of Large ribosomal subunit protein bL35 from Ralstonia pickettii (strain 12J).